The sequence spans 172 residues: Large ribosomal subunit protein bL17 (172 aa).

Residues 153–172 (AQAAEPVAAAEPATPATTAG) are disordered.

Belongs to the bacterial ribosomal protein bL17 family. In terms of assembly, part of the 50S ribosomal subunit. Contacts protein L32.

The protein is Large ribosomal subunit protein bL17 of Sorangium cellulosum (strain So ce56) (Polyangium cellulosum (strain So ce56)).